The chain runs to 248 residues: tRNA pseudouridine synthase A (248 aa).

The active-site Nucleophile is the Asp53. Substrate is bound at residue Tyr111.

This sequence belongs to the tRNA pseudouridine synthase TruA family. In terms of assembly, homodimer.

The enzyme catalyses uridine(38/39/40) in tRNA = pseudouridine(38/39/40) in tRNA. Its function is as follows. Formation of pseudouridine at positions 38, 39 and 40 in the anticodon stem and loop of transfer RNAs. The sequence is that of tRNA pseudouridine synthase A from Listeria innocua serovar 6a (strain ATCC BAA-680 / CLIP 11262).